The chain runs to 204 residues: Leucyl/phenylalanyl-tRNA--protein transferase (204 aa).

The protein belongs to the L/F-transferase family.

The protein resides in the cytoplasm. It catalyses the reaction N-terminal L-lysyl-[protein] + L-leucyl-tRNA(Leu) = N-terminal L-leucyl-L-lysyl-[protein] + tRNA(Leu) + H(+). The catalysed reaction is N-terminal L-arginyl-[protein] + L-leucyl-tRNA(Leu) = N-terminal L-leucyl-L-arginyl-[protein] + tRNA(Leu) + H(+). The enzyme catalyses L-phenylalanyl-tRNA(Phe) + an N-terminal L-alpha-aminoacyl-[protein] = an N-terminal L-phenylalanyl-L-alpha-aminoacyl-[protein] + tRNA(Phe). Functionally, functions in the N-end rule pathway of protein degradation where it conjugates Leu, Phe and, less efficiently, Met from aminoacyl-tRNAs to the N-termini of proteins containing an N-terminal arginine or lysine. The chain is Leucyl/phenylalanyl-tRNA--protein transferase from Brucella abortus (strain 2308).